Reading from the N-terminus, the 553-residue chain is CTP synthase (553 aa).

An amidoligase domain region spans residues 1–277 (MPTEPETDYD…DQYVMEELDI (277 aa)). Serine 26 provides a ligand contact to CTP. Position 26 (serine 26) interacts with UTP. ATP-binding positions include 27–32 (GLGKGI) and aspartate 84. Residues aspartate 84 and glutamate 152 each contribute to the Mg(2+) site. Residues 159–161 (DIE), 198–203 (KTKPTQ), and lysine 234 contribute to the CTP site. UTP is bound by residues 198 to 203 (KTKPTQ) and lysine 234. The Glutamine amidotransferase type-1 domain occupies 307–544 (LVGKYDLEDA…LEAVLGDDPH (238 aa)). Glycine 364 contacts L-glutamine. The Nucleophile; for glutamine hydrolysis role is filled by cysteine 391. L-glutamine-binding positions include 392–395 (LGFQ), glutamate 415, and arginine 472. Catalysis depends on residues histidine 517 and glutamate 519.

Belongs to the CTP synthase family. In terms of assembly, homotetramer.

It catalyses the reaction UTP + L-glutamine + ATP + H2O = CTP + L-glutamate + ADP + phosphate + 2 H(+). The enzyme catalyses L-glutamine + H2O = L-glutamate + NH4(+). It carries out the reaction UTP + NH4(+) + ATP = CTP + ADP + phosphate + 2 H(+). Its pathway is pyrimidine metabolism; CTP biosynthesis via de novo pathway; CTP from UDP: step 2/2. Its activity is regulated as follows. Allosterically activated by GTP, when glutamine is the substrate; GTP has no effect on the reaction when ammonia is the substrate. The allosteric effector GTP functions by stabilizing the protein conformation that binds the tetrahedral intermediate(s) formed during glutamine hydrolysis. Inhibited by the product CTP, via allosteric rather than competitive inhibition. In terms of biological role, catalyzes the ATP-dependent amination of UTP to CTP with either L-glutamine or ammonia as the source of nitrogen. Regulates intracellular CTP levels through interactions with the four ribonucleotide triphosphates. This chain is CTP synthase, found in Haloarcula marismortui (strain ATCC 43049 / DSM 3752 / JCM 8966 / VKM B-1809) (Halobacterium marismortui).